A 51-amino-acid polypeptide reads, in one-letter code: Large ribosomal subunit protein eL39 (51 aa).

This sequence belongs to the eukaryotic ribosomal protein eL39 family. Interacts with impact.

This chain is Large ribosomal subunit protein eL39 (rpl39), found in Ictalurus punctatus (Channel catfish).